The primary structure comprises 972 residues: Glycine dehydrogenase (decarboxylating) (972 aa).

An N6-(pyridoxal phosphate)lysine modification is found at K713.

The protein belongs to the GcvP family. In terms of assembly, the glycine cleavage system is composed of four proteins: P, T, L and H. Requires pyridoxal 5'-phosphate as cofactor.

It catalyses the reaction N(6)-[(R)-lipoyl]-L-lysyl-[glycine-cleavage complex H protein] + glycine + H(+) = N(6)-[(R)-S(8)-aminomethyldihydrolipoyl]-L-lysyl-[glycine-cleavage complex H protein] + CO2. The glycine cleavage system catalyzes the degradation of glycine. The P protein binds the alpha-amino group of glycine through its pyridoxal phosphate cofactor; CO(2) is released and the remaining methylamine moiety is then transferred to the lipoamide cofactor of the H protein. In Aromatoleum aromaticum (strain DSM 19018 / LMG 30748 / EbN1) (Azoarcus sp. (strain EbN1)), this protein is Glycine dehydrogenase (decarboxylating).